The following is a 440-amino-acid chain: Frizzled/smoothened-like sans CRD protein D (440 aa).

An N-terminal signal peptide occupies residues 1 to 27 (MFIILKFLISFFLICNFFNYNDHFASG). Residues 28–85 (QTLPPGFCPSPLIYRNSTNRQNDIENGYLFIGQTNCTSPCPSLIFSENEWHRVYNMSL) are Extracellular-facing. Residues asparagine 43, asparagine 62, and asparagine 82 are each glycosylated (N-linked (GlcNAc...) asparagine). A helical transmembrane segment spans residues 86 to 106 (IAGTISMFALIFLIITYSPLV). The Cytoplasmic segment spans residues 107–110 (NKYN). Residues 111–131 (GYTRHTVGILFLFCGIFLTVT) traverse the membrane as a helical segment. Over 132 to 162 (TDGRQLWDIDLGFEKYCPEPGRFARQSDTKC) the chain is Extracellular. Residues 163–183 (LVTAIFFQYGCVTSILWWAAI) form a helical membrane-spanning segment. At 184–200 (SVDLWMTIRKVKISKLQ) the chain is on the cytoplasmic side. The helical transmembrane segment at 201–221 (FITYAVILNIITLILTFAPIA) threads the bilayer. Residues 222-244 (SKQYGYGEAAIGCWLMDLKYQVG) are Extracellular-facing. The chain crosses the membrane as a helical span at residues 245–265 (YFWAPVGFCLCVGCVSIVLII). The Cytoplasmic portion of the chain corresponds to 266-285 (REIYKVSDAIKKKLLAKHLK). The helical transmembrane segment at 286-306 (PLMLIILMLSEFIYMFIFYSY) threads the bilayer. Topologically, residues 307–346 (TTSRRGHYHDVVEKYIRCLFINASNPSICEVDVSISSPAH) are extracellular. A glycan (N-linked (GlcNAc...) asparagine) is linked at asparagine 328. Residues 347 to 367 (FFFHFCMRLMGIEGLIFFGFT) traverse the membrane as a helical segment. Residues 368–440 (RQTKRIWLRS…IELSGVDSKN (73 aa)) lie on the Cytoplasmic side of the membrane. Residues 395 to 428 (ISSDEKTSNSSHRTTRGCRETEFGESIEQSNDPE) are disordered.

It belongs to the G-protein coupled receptor Fz/Smo family.

The protein localises to the membrane. The protein is Frizzled/smoothened-like sans CRD protein D (fscD) of Dictyostelium discoideum (Social amoeba).